The following is a 67-amino-acid chain: Large ribosomal subunit protein bL31c (67 aa).

This sequence belongs to the bacterial ribosomal protein bL31 family. Type A subfamily. As to quaternary structure, part of the 50S ribosomal subunit.

The protein resides in the plastid. It localises to the chloroplast. In terms of biological role, binds the 23S rRNA. The polypeptide is Large ribosomal subunit protein bL31c (rpl31) (Cyanidioschyzon merolae (strain NIES-3377 / 10D) (Unicellular red alga)).